A 771-amino-acid polypeptide reads, in one-letter code: MTEEKLDTNSFRFFGLGGSNEVGRSCHILQYKGKTVMLDAGVHPAHQGIASLPFYDEFDLSQVEVLLISHFHLDHAASLPYVMQRTNFQGRVFMTHPTKAIYRWLLSDFVKVTNIGNDNAGGVSDENLYTDEDLAESFDRIETVDYHSTIDVNGIKFTAYHAGHVLGAAMFQVEIAGLRILFTGDYSRELDRHLNSAEIPTLPSDILIVESTFGTATHEPRTSKEKKLTQLIHTTVSKGGRVLLPVFALGRAQEIMLILDEYWSQHAEQLGNGQVPIFYASNLARKCMSVFQTYVNMMNDKIRKKFRDSQTNPFIFKNISYLKNLDEFQDFGPSVMLASPGMLQNGLSRDLLEKWCPDEKNLVLITGYSVEGTMAKFLMLEPETIPSINNSDVSIPRRCQVEEISFAAHVDFRENLEFVEKIGAPNIILVHGESNPMGRLKSALLSNFSSLKGTEDEVRVYNPRNCVAVDLEFKGVKIAKAVGNIVDEMLPVVDEDKERPYNDPEDATSEEQPKEEPQDADKLPEEREQPEVEEERVISGILVSDEKNFDLNLVSLSDLREHHTDLSTTVLKERQTVHVDCRNELIFWHLCQMFGDIEVLVDEEGATLTKVEEDEKNTKPGQLVVRVMGDIKLSVVDHVATLEWTQNVISDAVADSIVAILLSVDSSPASVKRSSHSCNSNDHPGESETLWKIKQIAKLFNEQFGDSFTLLLDKESEHSDNENIKGSVTIGKNYATVNFSKMAVEDCNSNPLKGRIESILGIGADLVAPLC.

Residues histidine 70, histidine 72, aspartate 74, histidine 75, histidine 164, and aspartate 185 each contribute to the Zn(2+) site. Histidine 409 acts as the Proton donor in catalysis. Residue histidine 431 participates in Zn(2+) binding. The disordered stretch occupies residues 493–533 (VDEDKERPYNDPEDATSEEQPKEEPQDADKLPEEREQPEVE). Residues 511 to 530 (EQPKEEPQDADKLPEEREQP) are compositionally biased toward basic and acidic residues.

Belongs to the metallo-beta-lactamase superfamily. RNA-metabolizing metallo-beta-lactamase-like family. CPSF2/YSH1 subfamily.

The protein localises to the nucleus. In terms of biological role, component of the cleavage factor I (CF I) involved in pre-mRNA 3'-end processing. The protein is Endoribonuclease YSH1 (YSH1) of Eremothecium gossypii (strain ATCC 10895 / CBS 109.51 / FGSC 9923 / NRRL Y-1056) (Yeast).